The sequence spans 88 residues: Small ribosomal subunit protein bS20 (88 aa).

A disordered region spans residues 1–27; the sequence is MANSKSAKKRALQSEKRRQHNASRRSM.

This sequence belongs to the bacterial ribosomal protein bS20 family.

Its function is as follows. Binds directly to 16S ribosomal RNA. In Shewanella frigidimarina (strain NCIMB 400), this protein is Small ribosomal subunit protein bS20.